Reading from the N-terminus, the 146-residue chain is Hemoglobin subunit beta (146 aa).

Val1 bears the N-acetylvaline mark. Residues 2 to 146 (HLTADEKAAV…VANALAHKYH (145 aa)) enclose the Globin domain. At Thr12 the chain carries Phosphothreonine. Ser44 bears the Phosphoserine mark. Residue Lys59 is modified to N6-acetyllysine. Residue His63 participates in heme b binding. Lys82 is modified (N6-acetyllysine). His92 serves as a coordination point for heme b. Cys93 is subject to S-nitrosocysteine. Lys144 bears the N6-acetyllysine mark.

This sequence belongs to the globin family. In terms of assembly, heterotetramer of two alpha chains and two beta chains. Red blood cells.

Functionally, involved in oxygen transport from the lung to the various peripheral tissues. The polypeptide is Hemoglobin subunit beta (HBB) (Odobenus rosmarus divergens (Pacific walrus)).